Consider the following 150-residue polypeptide: Endoribonuclease YbeY (150 aa).

The Zn(2+) site is built by His-116, His-120, and His-126.

It belongs to the endoribonuclease YbeY family. It depends on Zn(2+) as a cofactor.

It localises to the cytoplasm. Single strand-specific metallo-endoribonuclease involved in late-stage 70S ribosome quality control and in maturation of the 3' terminus of the 16S rRNA. The sequence is that of Endoribonuclease YbeY from Mesomycoplasma hyopneumoniae (strain 232) (Mycoplasma hyopneumoniae).